The primary structure comprises 104 residues: Large ribosomal subunit protein uL24 (104 aa).

It belongs to the universal ribosomal protein uL24 family. In terms of assembly, part of the 50S ribosomal subunit.

One of two assembly initiator proteins, it binds directly to the 5'-end of the 23S rRNA, where it nucleates assembly of the 50S subunit. Its function is as follows. One of the proteins that surrounds the polypeptide exit tunnel on the outside of the subunit. This is Large ribosomal subunit protein uL24 from Pseudomonas savastanoi pv. phaseolicola (strain 1448A / Race 6) (Pseudomonas syringae pv. phaseolicola (strain 1448A / Race 6)).